The chain runs to 227 residues: Orotidine 5'-phosphate decarboxylase (227 aa).

Residues D12, K34, 61-70 (DLKLHDIPNT), T117, R178, Q187, G207, and R208 each bind substrate. K63 serves as the catalytic Proton donor.

This sequence belongs to the OMP decarboxylase family. Type 1 subfamily. As to quaternary structure, homodimer.

The catalysed reaction is orotidine 5'-phosphate + H(+) = UMP + CO2. It functions in the pathway pyrimidine metabolism; UMP biosynthesis via de novo pathway; UMP from orotate: step 2/2. Its function is as follows. Catalyzes the decarboxylation of orotidine 5'-monophosphate (OMP) to uridine 5'-monophosphate (UMP). The protein is Orotidine 5'-phosphate decarboxylase of Anaeromyxobacter dehalogenans (strain 2CP-1 / ATCC BAA-258).